A 136-amino-acid chain; its full sequence is Succinate dehydrogenase assembly factor 3, mitochondrial (136 aa).

The transit peptide at 1-24 (MRASMVRRMAAAASSSASSSLRPA) directs the protein to the mitochondrion.

This sequence belongs to the complex I LYR family. SDHAF3 subfamily. As to quaternary structure, interacts with the iron-sulfur protein subunit within the SDH catalytic dimer.

The protein resides in the mitochondrion matrix. Functionally, plays an essential role in the assembly of succinate dehydrogenase (SDH), an enzyme complex (also referred to as respiratory complex II) that is a component of both the tricarboxylic acid (TCA) cycle and the mitochondrial electron transport chain, and which couples the oxidation of succinate to fumarate with the reduction of ubiquinone (coenzyme Q) to ubiquinol. Promotes maturation of the iron-sulfur protein subunit of the SDH catalytic dimer, protecting it from the deleterious effects of oxidants. May act together with SDHAF1. This chain is Succinate dehydrogenase assembly factor 3, mitochondrial, found in Pyricularia oryzae (strain 70-15 / ATCC MYA-4617 / FGSC 8958) (Rice blast fungus).